The chain runs to 99 residues: Integration host factor subunit alpha (99 aa).

The interval 49-75 (FGNFDLRDKNQRPGRNPKTGEDIPITA) is disordered.

It belongs to the bacterial histone-like protein family. In terms of assembly, heterodimer of an alpha and a beta chain.

Functionally, this protein is one of the two subunits of integration host factor, a specific DNA-binding protein that functions in genetic recombination as well as in transcriptional and translational control. This is Integration host factor subunit alpha from Salmonella arizonae (strain ATCC BAA-731 / CDC346-86 / RSK2980).